Consider the following 60-residue polypeptide: Potassium channel toxin Tst-beta-KTx (60 aa).

In terms of domain architecture, BetaSPN-type CS-alpha/beta spans 26 to 60 (QFGCPAYEGYCNDHCNDIERKDGECHGFKCKCAKD). 3 cysteine pairs are disulfide-bonded: Cys-29–Cys-50, Cys-36–Cys-55, and Cys-40–Cys-57.

This sequence belongs to the long chain scorpion toxin family. Class 1 subfamily. In terms of tissue distribution, expressed by the venom gland.

It is found in the secreted. Inhibits voltage-gated potassium channels Kv1.1/KCNA1, Kv1.2/KCNA2, and Kv1.3/KCNA3. Its function is as follows. Does not induce hemolytic activity, lactate dehydrogenase (LDH) release from mast cells, mast cell degranulation, and antimicrobial effects. In vivo, injection into mice causes moderate edema formation, but induces very weak or no change in nociceptive sensibility. It also reduces mice locomotion, suggesting an increase in anxiety, but causes no alteration in rearing (standing on hind limbs). The protein is Potassium channel toxin Tst-beta-KTx of Tityus stigmurus (Brazilian scorpion).